Consider the following 235-residue polypeptide: Clathrin light chain A (235 aa).

The tract at residues 1–32 (MAELDPFGAPAGAPGGPALGNGVAGAGEEDPA) is disordered. Residues 13–25 (APGGPALGNGVAG) are compositionally biased toward gly residues. The tract at residues 99–161 (VDRLQSEPES…QLQKTKANNR (63 aa)) is involved in binding clathrin heavy chain. Residues S104 and S193 each carry the phosphoserine modification. N6-acetyllysine is present on K210. The residue at position 223 (S223) is a Phosphoserine. K229 bears the N6-acetyllysine mark.

This sequence belongs to the clathrin light chain family. As to quaternary structure, clathrin coats are formed from molecules containing 3 heavy chains and 3 light chains. Interacts with CALY; the interaction stimulates clathrin self-assembly and clathrin-mediated endocytosis. Interacts with CKAP5 and TACC3 forming the TACC3/ch-TOG/clathrin complex located at spindle inter-microtubules bridges; the complex implicates clathrin triskelions.

It localises to the cytoplasmic vesicle membrane. The protein localises to the membrane. Its subcellular location is the coated pit. It is found in the cytoplasm. The protein resides in the cytoskeleton. It localises to the spindle. Clathrin is the major protein of the polyhedral coat of coated pits and vesicles. Acts as a component of the TACC3/ch-TOG/clathrin complex proposed to contribute to stabilization of kinetochore fibers of the mitotic spindle by acting as inter-microtubule bridge. This Mus musculus (Mouse) protein is Clathrin light chain A (Clta).